A 597-amino-acid chain; its full sequence is Elongation factor 4 (597 aa).

The tr-type G domain maps to 2–184 (KNIRNFSIIA…EIVAKIPAPT (183 aa)). GTP-binding positions include 14 to 19 (DHGKST) and 131 to 134 (NKID).

This sequence belongs to the TRAFAC class translation factor GTPase superfamily. Classic translation factor GTPase family. LepA subfamily.

The protein localises to the cell inner membrane. It catalyses the reaction GTP + H2O = GDP + phosphate + H(+). Functionally, required for accurate and efficient protein synthesis under certain stress conditions. May act as a fidelity factor of the translation reaction, by catalyzing a one-codon backward translocation of tRNAs on improperly translocated ribosomes. Back-translocation proceeds from a post-translocation (POST) complex to a pre-translocation (PRE) complex, thus giving elongation factor G a second chance to translocate the tRNAs correctly. Binds to ribosomes in a GTP-dependent manner. This Neisseria meningitidis serogroup B (strain ATCC BAA-335 / MC58) protein is Elongation factor 4.